The primary structure comprises 91 residues: Small ribosomal subunit protein bS20 (91 aa).

This sequence belongs to the bacterial ribosomal protein bS20 family.

In terms of biological role, binds directly to 16S ribosomal RNA. The sequence is that of Small ribosomal subunit protein bS20 from Caulobacter sp. (strain K31).